Here is a 139-residue protein sequence, read N- to C-terminus: Large-conductance mechanosensitive channel (139 aa).

3 consecutive transmembrane segments (helical) span residues 14 to 34 (VVDL…VNSA), 38 to 58 (IFMP…YYIP), and 82 to 102 (GQFL…FLVI).

This sequence belongs to the MscL family. In terms of assembly, homopentamer.

The protein localises to the cell inner membrane. Functionally, channel that opens in response to stretch forces in the membrane lipid bilayer. May participate in the regulation of osmotic pressure changes within the cell. This chain is Large-conductance mechanosensitive channel, found in Methylobacterium radiotolerans (strain ATCC 27329 / DSM 1819 / JCM 2831 / NBRC 15690 / NCIMB 10815 / 0-1).